The primary structure comprises 488 residues: 3-octaprenyl-4-hydroxybenzoate carboxy-lyase (488 aa).

Mn(2+) is bound at residue asparagine 172. Residues 175–177 (IYR), 189–191 (RWL), and 194–195 (RG) contribute to the prenylated FMN site. Glutamate 238 serves as a coordination point for Mn(2+). Aspartate 287 acts as the Proton donor in catalysis.

Belongs to the UbiD family. As to quaternary structure, homohexamer. Prenylated FMN is required as a cofactor. The cofactor is Mn(2+).

It localises to the cell membrane. The catalysed reaction is a 4-hydroxy-3-(all-trans-polyprenyl)benzoate + H(+) = a 2-(all-trans-polyprenyl)phenol + CO2. Its pathway is cofactor biosynthesis; ubiquinone biosynthesis. Functionally, catalyzes the decarboxylation of 3-octaprenyl-4-hydroxy benzoate to 2-octaprenylphenol, an intermediate step in ubiquinone biosynthesis. In Legionella pneumophila subsp. pneumophila (strain Philadelphia 1 / ATCC 33152 / DSM 7513), this protein is 3-octaprenyl-4-hydroxybenzoate carboxy-lyase.